Here is a 414-residue protein sequence, read N- to C-terminus: Probable solanesyl-diphosphate synthase 3, chloroplastic (414 aa).

Positions methionine 1–proline 23 are enriched in low complexity. The disordered stretch occupies residues methionine 1 to arginine 36. The transit peptide at methionine 1–proline 72 directs the protein to the chloroplast. Residues serine 24–glutamine 35 are compositionally biased toward pro residues. Positions 134, 137, and 172 each coordinate isopentenyl diphosphate. Mg(2+)-binding residues include aspartate 179 and aspartate 183. Residue arginine 188 participates in an all-trans-polyprenyl diphosphate binding. Arginine 189 contributes to the isopentenyl diphosphate binding site. Residues lysine 265, threonine 266, glutamine 303, and lysine 320 each coordinate an all-trans-polyprenyl diphosphate.

It belongs to the FPP/GGPP synthase family. Homodimer. Mg(2+) serves as cofactor.

It is found in the plastid. The protein resides in the chloroplast. The catalysed reaction is 7 isopentenyl diphosphate + (2E)-geranyl diphosphate = all-trans-nonaprenyl diphosphate + 7 diphosphate. Functionally, involved in providing solanesyl diphosphate for plastoquinone-9 (PQ-9) formation. The chain is Probable solanesyl-diphosphate synthase 3, chloroplastic from Oryza sativa subsp. japonica (Rice).